A 162-amino-acid polypeptide reads, in one-letter code: Flagellar assembly factor FliW (162 aa).

Belongs to the FliW family. In terms of assembly, interacts with translational regulator CsrA and flagellin(s).

It localises to the cytoplasm. Acts as an anti-CsrA protein, binds CsrA and prevents it from repressing translation of its target genes, one of which is flagellin. Binds to flagellin and participates in the assembly of the flagellum. This chain is Flagellar assembly factor FliW, found in Magnetococcus marinus (strain ATCC BAA-1437 / JCM 17883 / MC-1).